We begin with the raw amino-acid sequence, 266 residues long: Norfluorocurarine synthase 2 (266 aa).

The region spanning 11 to 121 is the AB hydrolase-1 domain; it reads HFVLVHGAGH…IMPDSTHPPI (111 aa). Active-site residues include serine 86, aspartate 216, and histidine 244.

It belongs to the AB hydrolase superfamily. As to quaternary structure, homodimer. As to expression, mainly expressed in roots.

The catalysed reaction is 17-dehydropreakuammicine + H2O = norfluorocurarine + methanol + CO2. It functions in the pathway alkaloid biosynthesis. Functionally, hydrolase involved in the biosynthesis of curare monoterpene indole alkaloids (MIAs), natural products such as strychnine, a neurotoxic compound used as a pesticide to control rodents, and its pharmacologically active derivatives, including brucine, used to regulate blood pressure. Curare alkaloids act as animal glycine receptor antagonists. Catalyzes the conversion of dehydropreakuammicine to norfluorocurarine. The protein is Norfluorocurarine synthase 2 of Strychnos nux-vomica (Poison nut).